A 72-amino-acid polypeptide reads, in one-letter code: Disintegrin crotatroxin (72 aa).

In terms of domain architecture, Disintegrin spans A1–G72. Cystine bridges form between C5–C20, C7–C15, C14–C37, C28–C34, C33–C58, and C46–C65. The short motif at R50–D52 is the Cell attachment site element.

The protein belongs to the venom metalloproteinase (M12B) family. P-II subfamily. P-IIa sub-subfamily. In terms of assembly, monomer. As to expression, expressed by the venom gland.

It localises to the secreted. Functionally, inhibits fibrinogen interaction with platelets. Acts by binding to the alpha-IIb/beta-3 (ITGA2B/ITGB3) on the platelet surface and inhibits aggregation induced by ADP, thrombin, platelet-activating factor and collagen. In terms of biological role, inhibits ADP-induced platelet aggregation (IC(50) = 17.5nM), cancer cell migration in vitro, and experimental lung tumor colonization of cancer cells. The polypeptide is Disintegrin crotatroxin (Crotalus atrox (Western diamondback rattlesnake)).